A 374-amino-acid polypeptide reads, in one-letter code: Tomoregulin-2 (374 aa).

Residues 1–39 (MVLWESPRQCSSWTLCEGFCWLLLLPVMLLIVARPVKLA) form the signal peptide. Topologically, residues 40–320 (AFPTSLSDCQ…VPGPVRFQYV (281 aa)) are extracellular. Residue Asn55 is glycosylated (N-linked (GlcNAc...) asparagine). Kazal-like domains lie at 90 to 137 (VCQF…SCAT) and 181 to 229 (VCNI…RCQD). 9 disulfides stabilise this stretch: Cys91–Cys121, Cys95–Cys114, Cys103–Cys135, Cys182–Cys213, Cys186–Cys206, Cys195–Cys227, Cys265–Cys278, Cys273–Cys289, and Cys291–Cys300. Residues 261 to 301 (HHIPCPEHYNGFCMHGKCEHSINMQEPSCRCDAGYTGQHCE) form the EGF-like domain. The segment at 303–320 (KDYSVLYVVPGPVRFQYV) is required for shedding. Residues 321–341 (LIAAVIGTIQIAVICVVVLCI) traverse the membrane as a helical segment. The Cytoplasmic portion of the chain corresponds to 342 to 374 (TRKCPRSNRIHRQKQNTGHYSSDNTTRASTRLI). The disordered stretch occupies residues 353–374 (RQKQNTGHYSSDNTTRASTRLI). The segment covering 356-374 (QNTGHYSSDNTTRASTRLI) has biased composition (polar residues).

It belongs to the tomoregulin family. Post-translationally, O-glycosylated; contains chondroitin sulfate glycosaminoglycans. A soluble form (TMEFF2-ECD) is produced by proteolytic shedding. This shedding can be induced by phorbol ester or pro-inflammatory cytokines such as TNFalpha, and is mediated by a metalloproteinase ADAM.

Its subcellular location is the membrane. May be a survival factor for hippocampal and mesencephalic neurons. The shedded form may up-regulate cell proliferation. The chain is Tomoregulin-2 (TMEFF2) from Bos taurus (Bovine).